The following is a 459-amino-acid chain: ATP synthase subunit beta (459 aa).

148 to 155 (GGAGVGKT) serves as a coordination point for ATP.

Belongs to the ATPase alpha/beta chains family. F-type ATPases have 2 components, CF(1) - the catalytic core - and CF(0) - the membrane proton channel. CF(1) has five subunits: alpha(3), beta(3), gamma(1), delta(1), epsilon(1). CF(0) has three main subunits: a(1), b(2) and c(9-12). The alpha and beta chains form an alternating ring which encloses part of the gamma chain. CF(1) is attached to CF(0) by a central stalk formed by the gamma and epsilon chains, while a peripheral stalk is formed by the delta and b chains.

It is found in the cell inner membrane. The catalysed reaction is ATP + H2O + 4 H(+)(in) = ADP + phosphate + 5 H(+)(out). Functionally, produces ATP from ADP in the presence of a proton gradient across the membrane. The catalytic sites are hosted primarily by the beta subunits. The sequence is that of ATP synthase subunit beta from Vesicomyosocius okutanii subsp. Calyptogena okutanii (strain HA).